A 728-amino-acid chain; its full sequence is Magnetosome formation protease MamE (728 aa).

Topologically, residues 1-21 are cytoplasmic; that stretch reads MAMFNGDVEDGGRGDASCGKD. The helical transmembrane segment at 22–42 threads the bilayer; the sequence is LKRYLMLMGVVALVVLFGAFI. Topologically, residues 43–728 are lumenal; it reads YRQSSGGLRL…RNGQEFWIVL (686 aa). Active-site charge relay system residues include H188, D221, and S297. An MCR (magnetochrome) 1 motif is present at residues 375–398; the sequence is IFAGTRAPHTDGRQNMDCTTCHDL. Heme is bound by residues C392, C395, H396, C438, C441, and H442. An MCR 2 motif is present at residues 421 to 444; that stretch reads IPMGAVSPHTDGRQNMNCANCHQM. PDZ domains lie at 471 to 573 and 622 to 721; these read AINI…LRDG and PAVM…NRNG.

The protein in the N-terminal section; belongs to the peptidase S1C family. Might interact with MamB via PDZ1. Heme serves as cofactor. In terms of processing, subject to autocatalytic cleavage; cleavage also requires MamO.

The protein localises to the magnetosome membrane. Its activity is regulated as follows. Autoproteolysis is stimulated by exogenous substrates or peptides that bind to its PDZ domains; may be stimulated by an environmental cue in vivo. Protease activity is tightly regulated; increasing its activity decreases substrate levels and disturbs biomineralization. Its function is as follows. Acts at 2 distinct steps of magnetosome formation; required for correct localization of proteins to the magnetosome while the protease activity is required for maturation of small magnetite crystals into larger, functional ones. The 2 functions are separable by mutation. Probably cleaves at least itself, MamO and MamP; cleavage requires the putative transport domain of MamO. Involved in localization of some proteins (at least MamA, MamC, MamF, MamI and MamJ) to the magnetosome. This Paramagnetospirillum magneticum (strain ATCC 700264 / AMB-1) (Magnetospirillum magneticum) protein is Magnetosome formation protease MamE (mamE).